Here is a 426-residue protein sequence, read N- to C-terminus: Lipid droplet localized protein (426 aa).

A helical membrane pass occupies residues 278–298 (FYGYLIGLWIMFLSIFVKYPF).

The protein belongs to the saccharopine dehydrogenase family.

The protein resides in the membrane. It localises to the lipid droplet. The chain is Lipid droplet localized protein from Caenorhabditis elegans.